Consider the following 294-residue polypeptide: UPF0282 protein APE_0500.1 (294 aa).

It belongs to the UPF0282 family.

The polypeptide is UPF0282 protein APE_0500.1 (Aeropyrum pernix (strain ATCC 700893 / DSM 11879 / JCM 9820 / NBRC 100138 / K1)).